The following is a 184-amino-acid chain: Photosystem I assembly protein Ycf4 (184 aa).

A run of 2 helical transmembrane segments spans residues Phe22 to Ser42 and Ile57 to Ser77.

The protein belongs to the Ycf4 family.

Its subcellular location is the plastid. It is found in the chloroplast thylakoid membrane. In terms of biological role, seems to be required for the assembly of the photosystem I complex. This is Photosystem I assembly protein Ycf4 from Illicium oligandrum (Star anise).